A 469-amino-acid polypeptide reads, in one-letter code: MTAKFTDYIVKDIGLAEFGRKEISLAETEMPGLMATREEYGPKQPLKGAKIAGSLHMTIQTAVLIETLVALGAEVRWVSCNIYSTQDHAAAAIAAAGIPVFAVKGETLKDYWDYTAKLFDWSDGGTPNMILDDGGDATMFVHQGLRAENGDTMFLDQHNSEEEEIFFALIKRILKEKPKGYFATLAKNIKGVSEETTTGVHRLYDMEKAGKLLFPAINVNDSVTKSKFDNLYGCRESLVDGIRRGTDVMLSGKVAMVAGFGDVGKGSAASLRQAGCRVMVSEVDPICALQAAMEGYQVVTMEDAAPIADIFVTATGNKDIITIEHMRAMKDRAIVCNIGHFDNEIQVATLKNMKWDNIKPQVDEITFPDGKRMILLSEGRLVNLGNAMGHPSFVMSASFTNQTLAQIELFQNQGKYEKKVYVLPKTLDEKVARLHLAKIGVKLTELRKDQADYIGVKVEGPFKADHYRY.

Substrate-binding residues include Thr58, Asp133, and Glu195. 196–198 (TTT) contributes to the NAD(+) binding site. Substrate-binding residues include Lys225 and Asp229. NAD(+) is bound by residues Asn230, 259 to 264 (GFGDVG), Glu282, Asn317, 338 to 340 (IGH), and Asn383.

Belongs to the adenosylhomocysteinase family. NAD(+) serves as cofactor.

It localises to the cytoplasm. The enzyme catalyses S-adenosyl-L-homocysteine + H2O = L-homocysteine + adenosine. It functions in the pathway amino-acid biosynthesis; L-homocysteine biosynthesis; L-homocysteine from S-adenosyl-L-homocysteine: step 1/1. In terms of biological role, may play a key role in the regulation of the intracellular concentration of adenosylhomocysteine. In Rhodopseudomonas palustris (strain ATCC BAA-98 / CGA009), this protein is Adenosylhomocysteinase.